Reading from the N-terminus, the 766-residue chain is Protein STB6 (766 aa).

Residues 447–469 form a disordered region; that stretch reads VPSEQLTTSNKEDSDTQPTKRNS. Serine 514 carries the phosphoserine modification.

It to yeast STB2.

Binds to SIN3. The polypeptide is Protein STB6 (STB6) (Saccharomyces cerevisiae (strain ATCC 204508 / S288c) (Baker's yeast)).